We begin with the raw amino-acid sequence, 255 residues long: tRNA pseudouridine synthase A (255 aa).

D52 acts as the Nucleophile in catalysis. Y111 is a binding site for substrate.

It belongs to the tRNA pseudouridine synthase TruA family. Homodimer.

It carries out the reaction uridine(38/39/40) in tRNA = pseudouridine(38/39/40) in tRNA. Functionally, formation of pseudouridine at positions 38, 39 and 40 in the anticodon stem and loop of transfer RNAs. In Cereibacter sphaeroides (strain KD131 / KCTC 12085) (Rhodobacter sphaeroides), this protein is tRNA pseudouridine synthase A.